A 355-amino-acid chain; its full sequence is 3-dehydroquinate synthase (355 aa).

NAD(+) contacts are provided by residues 105 to 109, 129 to 130, Lys142, Lys151, and 169 to 172; these read GVVGD, TS, and TLKT. Residues Glu184, His246, and His263 each contribute to the Zn(2+) site.

Belongs to the sugar phosphate cyclases superfamily. Dehydroquinate synthase family. Requires Co(2+) as cofactor. Zn(2+) is required as a cofactor. It depends on NAD(+) as a cofactor.

Its subcellular location is the cytoplasm. The enzyme catalyses 7-phospho-2-dehydro-3-deoxy-D-arabino-heptonate = 3-dehydroquinate + phosphate. It participates in metabolic intermediate biosynthesis; chorismate biosynthesis; chorismate from D-erythrose 4-phosphate and phosphoenolpyruvate: step 2/7. Catalyzes the conversion of 3-deoxy-D-arabino-heptulosonate 7-phosphate (DAHP) to dehydroquinate (DHQ). The sequence is that of 3-dehydroquinate synthase from Streptococcus agalactiae serotype Ia (strain ATCC 27591 / A909 / CDC SS700).